Reading from the N-terminus, the 876-residue chain is Phosphoenolpyruvate carboxylase (876 aa).

Catalysis depends on residues H138 and K543.

The protein belongs to the PEPCase type 1 family. It depends on Mg(2+) as a cofactor.

The enzyme catalyses oxaloacetate + phosphate = phosphoenolpyruvate + hydrogencarbonate. Its function is as follows. Forms oxaloacetate, a four-carbon dicarboxylic acid source for the tricarboxylic acid cycle. The polypeptide is Phosphoenolpyruvate carboxylase (Pseudomonas fluorescens (strain Pf0-1)).